The following is a 92-amino-acid chain: Small ribosomal subunit protein uS19 (92 aa).

The protein belongs to the universal ribosomal protein uS19 family.

In terms of biological role, protein S19 forms a complex with S13 that binds strongly to the 16S ribosomal RNA. The protein is Small ribosomal subunit protein uS19 of Rhizobium etli (strain CIAT 652).